The following is a 323-amino-acid chain: tRNA dimethylallyltransferase (323 aa).

12–19 (GPTASGKT) lines the ATP pocket. 14-19 (TASGKT) provides a ligand contact to substrate. 2 interaction with substrate tRNA regions span residues 37–40 (DSAL) and 161–165 (QRLVR).

This sequence belongs to the IPP transferase family. Monomer. Requires Mg(2+) as cofactor.

It catalyses the reaction adenosine(37) in tRNA + dimethylallyl diphosphate = N(6)-dimethylallyladenosine(37) in tRNA + diphosphate. Functionally, catalyzes the transfer of a dimethylallyl group onto the adenine at position 37 in tRNAs that read codons beginning with uridine, leading to the formation of N6-(dimethylallyl)adenosine (i(6)A). The chain is tRNA dimethylallyltransferase from Stutzerimonas stutzeri (strain A1501) (Pseudomonas stutzeri).